The primary structure comprises 517 residues: 6-phosphogluconate dehydrogenase, decarboxylating (517 aa).

NADP(+)-binding positions include Gly-35–Gly-40, Asn-58–Thr-60, Val-100–Ala-102, and Asn-128. Residues Asn-128 and Ser-154–Gly-156 contribute to the substrate site. Residue Lys-208 is the Proton acceptor of the active site. His-211–Asn-212 provides a ligand contact to substrate. Glu-215 functions as the Proton donor in the catalytic mechanism. 5 residues coordinate substrate: Tyr-216, Lys-286, Arg-313, Arg-474, and His-480.

The protein belongs to the 6-phosphogluconate dehydrogenase family. As to quaternary structure, homodimer.

It carries out the reaction 6-phospho-D-gluconate + NADP(+) = D-ribulose 5-phosphate + CO2 + NADPH. It participates in carbohydrate degradation; pentose phosphate pathway; D-ribulose 5-phosphate from D-glucose 6-phosphate (oxidative stage): step 3/3. Functionally, catalyzes the oxidative decarboxylation of 6-phosphogluconate to ribulose 5-phosphate and CO(2), with concomitant reduction of NADP to NADPH. The protein is 6-phosphogluconate dehydrogenase, decarboxylating (DOR14) of Candida albicans (Yeast).